Here is a 454-residue protein sequence, read N- to C-terminus: MFQTVTAPTGVWRGRVTGDVTVFHGIQYARADRFAPPQRCEPQLQHLVEVPEPGPIAPQSPSRLEGVMGAPSSLKQSEACLTVTVTTPHLAQPGSLPVLVWLHGGAFLSGSGAWEQYGAEQLVRETGIVVVSVNYRLGVLGYLCAPGISSGNLGLLDQITALEWVRDNIEAFGGDNGRVTLDGQSAGAHSIVAMLGIDRARSLFSRAIIQSAPLGLGFHSVEQARRAAEIFEEELGSDPRRAVVTDILAAQARTAHRLAGRGAMNSAPPFLPVHGMAPLPFVGEWNGKVAANAARRKILIGNTRDEMAAFFGPHPVFSAMRRVPLAGPQLAGAIQRRVQKVVFDNPVQEFADRFASAGASVWRYGIGPLHPDNPFGACHCIDIPLLFGDGDTWRDAPMLRPLSPKEIGESGTRTRRYWGEFVHTGRISDPAWPMHRPKSRYAHLLTDETIGGSA.

S185 acts as the Acyl-ester intermediate in catalysis. Active-site charge relay system residues include E306 and H379.

This sequence belongs to the type-B carboxylesterase/lipase family.

It carries out the reaction N-octanoylanthranilate + H2O = anthranilate + octanoate + H(+). Involved in the degradation of the Pseudomonas aeruginosa quorum sensing signal molecules HHQ (2-heptyl-4-quinolone) and PQS (2-heptyl-3-hydroxy-4-quinolone) to anthranilic acid. Probably catalyzes the hydrolysis of N-octanoylanthranilic acid to anthranilic acid. The chain is Probable N-octanoylanthranilate hydrolase AqdA2 from Rhodococcus erythropolis (Arthrobacter picolinophilus).